The primary structure comprises 810 residues: Plasminogen (810 aa).

The first 19 residues, 1-19 (MEHKEVVLLLLLFLKSGQG), serve as a signal peptide directing secretion. Residues 20–98 (EPLDDYVNTQ…RDVVLFEKKV (79 aa)) form the PAN domain. Cystine bridges form between C49–C73, C53–C61, C103–C181, C124–C164, C152–C176, C185–C262, C188–C316, C206–C245, C234–C257, C275–C352, C296–C335, and C324–C347. 3 Kringle domains span residues 103–181 (CKTG…IPEC), 184–262 (ACMH…IPRC), and 275–352 (CLKG…IPSC). A disordered region spans residues 126–145 (KWSSTSPHRPRFSPATHPSE). L-lysine contacts are provided by R136, D158, and R172. T365 carries an O-linked (GalNAc...) threonine glycan. Intrachain disulfides connect C377–C454, C398–C437, C426–C449, C481–C560, C502–C543, C531–C555, C567–C685, C577–C585, and C607–C623. Kringle domains lie at 377 to 454 (CYHG…LKKC) and 481 to 560 (CMFG…VPQC). The L-lysine site is built by D432 and R445. The region spanning 581-808 (VVGGCVANAH…FVTWIEGVMR (228 aa)) is the Peptidase S1 domain. Position 597 is a phosphoserine (S597). Residues H622 and D665 each act as charge relay system in the active site. S688 is modified (phosphoserine). Cystine bridges form between C699–C766, C729–C745, and C756–C784. S760 (charge relay system) is an active-site residue.

This sequence belongs to the peptidase S1 family. Plasminogen subfamily. In terms of assembly, interacts with CSPG4 and AMOT. Interacts (via the Kringle domains) with HRG; the interaction tethers PLG to the cell surface and enhances its activation. Interacts (via Kringle 4 domain) with ADA; the interaction stimulates PLG activation when in complex with DPP4. Angiostatin: Interacts with ATP5F1A; the interaction inhibits most of the angiogenic effects of angiostatin. In terms of processing, in the presence of the inhibitor, the activation involves only cleavage after Arg-580, yielding two chains held together by two disulfide bonds. In the absence of the inhibitor, the activation involves additionally the removal of the activation peptide.

The protein localises to the secreted. It catalyses the reaction Preferential cleavage: Lys-|-Xaa &gt; Arg-|-Xaa, higher selectivity than trypsin. Converts fibrin into soluble products.. With respect to regulation, converted into plasmin by plasminogen activators, both plasminogen and its activator being bound to fibrin. Activated with catalytic amounts of streptokinase. In terms of biological role, plasmin dissolves the fibrin of blood clots and acts as a proteolytic factor in a variety of other processes including embryonic development, tissue remodeling, tumor invasion, and inflammation. In ovulation, weakens the walls of the Graafian follicle. It activates the urokinase-type plasminogen activator, collagenases and several complement zymogens, such as C1, C4 and C5. Cleavage of fibronectin and laminin leads to cell detachment and apoptosis. Also cleaves fibrin, thrombospondin and von Willebrand factor. Its role in tissue remodeling and tumor invasion may be modulated by CSPG4. Binds to cells. In Pongo abelii (Sumatran orangutan), this protein is Plasminogen (PLG).